The primary structure comprises 354 residues: Ornithine carbamoyltransferase, catabolic (354 aa).

Carbamoyl phosphate contacts are provided by residues 67-70 (STRT), Gln-94, Arg-118, and 145-148 (HPTQ). L-ornithine-binding positions include Asn-177, Asp-241, and 245–246 (SM). Carbamoyl phosphate contacts are provided by residues 284 to 285 (CL) and Arg-329.

It belongs to the aspartate/ornithine carbamoyltransferase superfamily. OTCase family.

Its subcellular location is the cytoplasm. The enzyme catalyses carbamoyl phosphate + L-ornithine = L-citrulline + phosphate + H(+). Its pathway is amino-acid degradation; L-arginine degradation via ADI pathway; carbamoyl phosphate from L-arginine: step 2/2. In terms of biological role, reversibly catalyzes the transfer of the carbamoyl group from carbamoyl phosphate (CP) to the N(epsilon) atom of ornithine (ORN) to produce L-citrulline. The chain is Ornithine carbamoyltransferase, catabolic (arcB) from Lactococcus lactis subsp. cremoris (strain MG1363).